Here is a 276-residue protein sequence, read N- to C-terminus: Undecaprenyl-diphosphatase 1 (276 aa).

5 helical membrane passes run 83–103 (FTLN…LFEK), 108–128 (VLFS…IILW), 187–207 (VATE…TLYE), 217–237 (VDSL…AFVC), and 252–272 (VFAW…YSGW).

Belongs to the UppP family.

The protein resides in the cell inner membrane. It catalyses the reaction di-trans,octa-cis-undecaprenyl diphosphate + H2O = di-trans,octa-cis-undecaprenyl phosphate + phosphate + H(+). In terms of biological role, catalyzes the dephosphorylation of undecaprenyl diphosphate (UPP). Confers resistance to bacitracin. The polypeptide is Undecaprenyl-diphosphatase 1 (Burkholderia cenocepacia (strain HI2424)).